Consider the following 647-residue polypeptide: DNA mismatch repair protein MutL (647 aa).

It belongs to the DNA mismatch repair MutL/HexB family.

Functionally, this protein is involved in the repair of mismatches in DNA. It is required for dam-dependent methyl-directed DNA mismatch repair. May act as a 'molecular matchmaker', a protein that promotes the formation of a stable complex between two or more DNA-binding proteins in an ATP-dependent manner without itself being part of a final effector complex. This Bacillus cereus (strain G9842) protein is DNA mismatch repair protein MutL.